Consider the following 96-residue polypeptide: Large ribosomal subunit protein uL23 (96 aa).

It belongs to the universal ribosomal protein uL23 family. Part of the 50S ribosomal subunit. Contacts protein L29, and trigger factor when it is bound to the ribosome.

In terms of biological role, one of the early assembly proteins it binds 23S rRNA. One of the proteins that surrounds the polypeptide exit tunnel on the outside of the ribosome. Forms the main docking site for trigger factor binding to the ribosome. The chain is Large ribosomal subunit protein uL23 from Brevibacillus brevis (strain 47 / JCM 6285 / NBRC 100599).